Consider the following 263-residue polypeptide: Rano class II histocompatibility antigen, B-1 beta chain (263 aa).

Positions 1 to 27 (MALQTPSFLLPAAVVVLMVLSSPGTEG) are cleaved as a signal peptide. The interval 28–120 (RDSPRDFVYQ…SEVRTSLRRL (93 aa)) is beta-1. At 28–224 (RDSPRDFVYQ…RAQSESAQSK (197 aa)) the chain is on the extracellular side. Intrachain disulfides connect Cys42–Cys104 and Cys143–Cys199. An N-linked (GlcNAc...) asparagine glycan is attached at Asn46. The beta-2 stretch occupies residues 121-214 (EQPNVAISLS…SLESPVTVEW (94 aa)). The region spanning 123-211 (PNVAISLSRT…DHPSLESPVT (89 aa)) is the Ig-like C1-type domain. Residues 215 to 224 (RAQSESAQSK) form a connecting peptide region. A helical transmembrane segment spans residues 225–245 (MLSGIGGFVLGVIFLGLGLFI). Topologically, residues 246–263 (RHKRQKGPRGPPPAGLLQ) are cytoplasmic. Lys251 participates in a covalent cross-link: Glycyl lysine isopeptide (Lys-Gly) (interchain with G-Cter in ubiquitin).

This sequence belongs to the MHC class II family.

Its subcellular location is the membrane. Its function is as follows. Involved in the presentation of foreign antigens to the immune system. The polypeptide is Rano class II histocompatibility antigen, B-1 beta chain (RT1-Bb) (Rattus norvegicus (Rat)).